Reading from the N-terminus, the 144-residue chain is Large ribosomal subunit protein uL15 (144 aa).

Residues 1–57 are disordered; sequence MELNNIKPADGAKKDKRRVGRGIGSGLGKTAGRGHKGQKSRAGGFHKVGFEGGQMPM. The segment covering 21-31 has biased composition (gly residues); sequence RGIGSGLGKTA.

The protein belongs to the universal ribosomal protein uL15 family. As to quaternary structure, part of the 50S ribosomal subunit.

In terms of biological role, binds to the 23S rRNA. The sequence is that of Large ribosomal subunit protein uL15 from Thiobacillus denitrificans (strain ATCC 25259 / T1).